The following is a 5495-amino-acid chain: Microtubule-associated protein futsch (5495 aa).

20 disordered regions span residues 1–97 (MGDQ…DADG), 656–975 (AKAD…LKEE), 988–1074 (RDEM…AEEE), 1086–1111 (ERKA…EQSK), 1128–1167 (KSRT…IGAP), 1185–1204 (SATI…DERI), 1255–1275 (KDAP…SGER), 1306–1358 (HEEA…EPNK), 1402–1840 (NQED…VVES), 1866–2631 (EIGK…PGFV), 2709–2810 (AKTV…KDFA), 2830–4166 (LPTL…DLSL), 4196–4230 (KAES…EASP), 4362–4612 (IIPD…ASQL), 4636–4668 (AQKS…DDSL), 4687–4975 (AFST…QMLA), 5035–5065 (KTVT…ERDQ), 5101–5138 (SYEL…EEHS), 5170–5199 (PSTE…QTWA), and 5328–5350 (GLPS…PKKE). A compositionally biased stretch (low complexity) spans 35-48 (AKGAGDGPAQDAAQ). Composition is skewed to basic and acidic residues over residues 656–672 (AKAD…HEAD), 696–716 (EPEH…KKVE), and 758–795 (GKAD…EKKS). 2 stretches are compositionally biased toward low complexity: residues 797–806 (PTTTPAARAP) and 819–831 (PATK…TPAK). Residues 832–843 (SAKEANNRKVLE) are compositionally biased toward basic and acidic residues. A compositionally biased stretch (low complexity) spans 850–888 (RVQATSTVSRRVTSTASERRVQQQAEAKTAATGATQATQ). The segment covering 918–931 (KAADLKKTRLDKGG) has biased composition (basic and acidic residues). Residues 932–942 (TTDSSLVSTPS) are compositionally biased toward polar residues. Basic and acidic residues-rich tracts occupy residues 962–975 (DAEK…LKEE) and 988–1007 (RDEM…REMP). Positions 1012–1041 (GDGENEPDEEEEYLIIEKEEVEQYTEDSIV) are enriched in acidic residues. Basic and acidic residues predominate over residues 1047-1065 (MTKEEEIQKHQRDSQESEK). Basic and acidic residues-rich tracts occupy residues 1128–1140 (KSRT…KPAE) and 1148–1163 (PEEK…KDDQ). A compositionally biased stretch (polar residues) spans 1187–1196 (TIESGATTAP). Basic and acidic residues-rich tracts occupy residues 1306 to 1319 (HEEA…KDSQ), 1327 to 1337 (SHKEESAKEEK), 1343 to 1358 (KENK…EPNK), and 1408 to 1443 (EQVK…KETS). 2 consecutive repeat copies span residues 1469 to 1502 (REDT…VPAP) and 1513 to 1539 (LASK…KSKK). Positions 1469–4032 (REDTGSIESP…SPLASKESSR (2564 aa)) are 53 X approximate repeat. Basic and acidic residues-rich tracts occupy residues 1546–1555 (PESEAKDKKS), 1571–1663 (SVKD…DEKS), 1679–1696 (SVKD…RESI), 1718–1732 (GIKD…RRDS), and 1748–1779 (SVKD…DEKS). 17 tandem repeats follow at residues 1622–1649 (KSAL…RESI), 1660–1686 (DEKS…ETEK), 1690–1718 (PSRR…VIDG), 1755–1782 (KSTE…SPLT), 1790–1818 (ESAV…RDVS), 1837–1865 (VVES…FVSL), 1874–1902 (SEVI…IVLP), 1911–1939 (PSRP…SVAE), 1948–1976 (KETS…ESVK), 1985–2013 (TSRP…STTQ), 2022–2050 (DEKS…EKSK), 2059–2087 (AEKS…EKSK), 2096–2124 (AEKS…EKSK), 2133–2161 (AEKS…EKSK), 2170–2198 (AEKS…EKSK), 2215–2243 (KEAS…RESV), and 2262–2292 (ESIK…KEAS). Polar residues predominate over residues 1804 to 1815 (ERSQPESVTASR). Composition is skewed to basic and acidic residues over residues 1887-1896 (VKPESRRESS), 1904-1942 (HAED…ESDK), 1960-1976 (MKDE…ESVK), 1994-2007 (SAKD…ELSR), 2041-2059 (SVKD…ESVA), 2078-2096 (SIKD…ESVA), 2115-2133 (SIKD…ESVA), 2152-2170 (SIKD…ESVA), 2189-2207 (SIKD…ESVA), 2226-2244 (SIKD…ESVA), 2263-2281 (SIKD…ESVA), 2300-2318 (SIKD…ESVA), 2337-2355 (SIKD…ESAA), 2374-2391 (SVKD…RESM), 2419-2435 (SVKD…RRES), 2466-2482 (SVKD…ESKT), 2560-2588 (IKYD…EDKS), and 2604-2627 (SDHE…DKSR). Copy 20 of the repeat occupies 2355–2391 (AEKSPLPSKEASRPASVAESVKDEADKSKEESRRESM). Repeat copies occupy residues 2703–2726 (LAQI…PSAP) and 2761–2787 (WVAE…ASTE). Basic and acidic residues predominate over residues 2764-2780 (ESKDDAAQLKSSVEDLR). The residue at position 2800 (S2800) is a Phosphoserine; by GSK3-beta. Tandem repeats lie at residues 2820–2846 (LPLT…DFPQ), 2864–2892 (LSKV…AEER), and 2907–2933 (VEKS…GDIS). Residues 2845–2861 (PQTSTPTSSPTVASVQP) show a composition bias toward low complexity. Composition is skewed to basic and acidic residues over residues 2889–2914 (AEER…KDAS) and 2942–2954 (GPKD…KESS). The span at 2955–2966 (RPPSVSASITGD) shows a compositional bias: polar residues. 28 tandem repeats follow at residues 2956-2987 (PPSV…EHDK), 3006-3034 (GKSD…SRRE), 3049-3075 (SRPE…KDTS), 3089-3117 (EKSE…SQEA), 3131-3158 (DEKQ…SPMD), 3200-3224 (KSDI…SVVG), 3228-3256 (DEKA…APPS), 3265-3293 (VLGS…EKSL), 3302-3330 (PESE…ESVK), 3339-3367 (KEAS…ESLP), 3376-3404 (DEKS…EQFP), 3413-3441 (PASV…ASRP), 3450-3478 (DEAE…ASRP), 3487-3515 (DEAD…ASRP), 3524-3552 (DEAE…ASRP), 3561-3589 (DEAE…ASRP), 3598-3626 (DEAE…ASRP), 3635-3663 (DEAE…ASRP), 3672-3700 (DEAE…ASRP), 3709-3737 (DEAE…ASRP), 3746-3774 (DDAE…ASRP), 3783-3811 (DEAE…ASRP), 3820-3848 (DEAE…ASRP), 3867-3894 (RRES…SVKD), 3895-3921 (EAEK…EASR), 3931-3958 (DEAD…EASR), 3968-3995 (DETE…EASR), and 4005-4032 (DEAE…ESSR). 7 stretches are compositionally biased toward basic and acidic residues: residues 2980 to 2996 (SVKD…ESIA), 3017 to 3051 (SQKD…ESRP), 3061 to 3075 (VPRE…KDTS), 3087 to 3116 (EDEK…KSQE), 3156 to 3168 (PMDK…EPSR), 3175 to 3208 (SIKH…KGEK), and 3226 to 3248 (IKDE…ESSK). Phosphoserine occurs at positions 3067, 3071, and 3075. Residues 3300 to 3310 (SRPESEAESLK) show a composition bias toward basic and acidic residues. Residues 3316 to 3327 (SQETSRPESVTE) are compositionally biased toward polar residues. Composition is skewed to basic and acidic residues over residues 3350-3363 (NAKD…EQRP), 3373-3399 (SIKD…RESV), 3419-3431 (SVKD…KEES), 3448-3465 (VKDE…ESVA), 3484-3502 (SVKD…ESGA), 3521-3539 (SIKD…ESVA), 3558-3576 (SVKD…DSVA), 3599-3613 (EAEK…ESVA), 3632-3650 (SIKD…ESVA), 3669-3687 (SVKD…DSVA), 3710-3724 (EAEK…ESVA), 3743-3761 (SVKD…ESVA), 3780-3798 (SVKD…ESVA), and 3817-3835 (SVKD…ESVA). The span at 3836-3850 (EKSSLASKKASRPAS) shows a compositional bias: low complexity. Composition is skewed to basic and acidic residues over residues 3854-3872 (SVKD…ESVA), 3891-3909 (SVKD…ESVA), 3928-3946 (SVKD…ESGA), 3965-3983 (SVKD…ESVT), 4002-4020 (SVKD…ESVA), 4039-4066 (SIKD…ESIK), 4086-4095 (SVKDETEKPE), and 4115-4141 (AKDE…KEAS). Polar residues-rich tracts occupy residues 4142 to 4152 (RSLSVAETASS) and 4214 to 4223 (QPDTGHTAST). Basic and acidic residues-rich tracts occupy residues 4362–4379 (IIPD…KSTA), 4386–4410 (DKST…KSSP), and 4419–4432 (IEEK…EKAQ). Low complexity predominate over residues 4443 to 4461 (PESVASQPESVPSPSQSAA). The segment covering 4462-4481 (SHEHKEVELSESHKAEKSSR) has biased composition (basic and acidic residues). Residues 4498 to 4508 (RPASSTSQFST) show a composition bias toward polar residues. Residues 4517–4528 (ESLLHSLTTTET) are compositionally biased toward low complexity. The span at 4529–4539 (VETKQMEEKSS) shows a compositional bias: basic and acidic residues. Over residues 4540 to 4560 (FESVSTSVTKSTVLSSQSTVQ) the composition is skewed to low complexity. Basic and acidic residues-rich tracts occupy residues 4575-4584 (KVEDSSRRES) and 4639-4650 (SNKEIKDARETK). Low complexity-rich tracts occupy residues 4651–4662 (VTSQFTTTTSSA) and 4703–4714 (TTASAVSSTSAS). Positions 4744 to 4754 (PEDEEPADDVD) are enriched in acidic residues. Composition is skewed to basic and acidic residues over residues 4755-4764 (ERSSVKESRS) and 4788-4798 (LVEEEHEHVEE). The span at 4804–4829 (TSTSKTTTLLQSSEQSSTTTSSTSKT) shows a compositional bias: low complexity. The segment covering 4835–4851 (ESITLTQMDQQTSQSQG) has biased composition (polar residues). The span at 4875-4905 (GSAGSVIGAGAGAVAAGGKCESSAASIVSSS) shows a compositional bias: low complexity. Positions 4915–4930 (GKSSPGALTSESQSIP) are enriched in polar residues. S4950 bears the Phosphoserine; by GSK3-beta mark. Over residues 4955–4970 (VSKDELKSLEMQHHSQ) the composition is skewed to basic and acidic residues. The segment covering 5101–5112 (SYELQHSSSGVS) has biased composition (polar residues). Positions 5185-5196 (SQSSESVESSSQ) are enriched in low complexity.

As to quaternary structure, heterodimer of a heavy and a light chain. Interacts with Fmr1. Found in a complex with tubulin and Futsch. In terms of processing, several minor light chains can be created with markedly different pIs. Post-translationally, phosphorylated by SGG/GSK3. Phosphorylated by LRRK2 at the presynapse of neuromuscular junctions, which negatively regulates the activity controlling synaptic differentiation. Neuronal cells within the PNS and CNS.

Its subcellular location is the cytoplasm. The protein localises to the cytoskeleton. Its function is as follows. During embryogenesis, necessary for dendritic and axonal organization and growth at the neuromuscular junction through the regulation of the synaptic microtubule cytoskeleton. Microtubule hairpin loops are found within a small subset of synaptic boutons at the neuromuscular synapse, these loops are stabilized by futsch. Loop morphology and dynamics suggest that rearrangement of these microtubule-based loops is a critical component of the process of bouton division and for subsequent nerve-terminal growth and branching. Translation is repressed by Fmr1. Together with ringer, required for neuromuscular junction (NMJ) bouton growth by regulating synaptic microtubules. Function with ringer in maintaining microtubule stability and dynamics, is essential for promoting axon regeneration in response to peripheral (PNS) and central nervous system (CNS) injury. In response to axotomy, acts downstream of a stress response cascade involving Xbp1 splicing, to control axon regeneration. The chain is Microtubule-associated protein futsch (futsch) from Drosophila melanogaster (Fruit fly).